The primary structure comprises 188 residues: MLLSDRDIRAAINSGELKIDPHDDQMVQPSSIDVRLDGLFRVFNNSKYTHIDPKQPQEELTTLVEVPDDEAFILHPGEFVLGATLECFGIPAHLAGRLEGKSSLGRLGLLTHSTAGFIDPGFTGHITLELSNTANLPIALYPGMKIGQLALFTMTSPAEAPYGSGTLGSKYQGQRGPTPSKAYLNFQN.

Residues 101 to 106 (KSSLGR), Asp-119, 127 to 129 (TLE), Gln-148, Tyr-162, and Gln-174 each bind dCTP. Catalysis depends on Glu-129, which acts as the Proton donor/acceptor.

Belongs to the dCTP deaminase family. Homotrimer.

The catalysed reaction is dCTP + 2 H2O = dUMP + NH4(+) + diphosphate. The protein operates within pyrimidine metabolism; dUMP biosynthesis; dUMP from dCTP: step 1/1. Its function is as follows. Bifunctional enzyme that catalyzes both the deamination of dCTP to dUTP and the hydrolysis of dUTP to dUMP without releasing the toxic dUTP intermediate. The chain is dCTP deaminase, dUMP-forming from Corynebacterium jeikeium (strain K411).